The primary structure comprises 456 residues: Senecionine N-oxygenase (456 aa).

An N-terminal signal peptide occupies residues 1-22 (MFRKFVIMLVLSLLVAAGISQA). An FAD-binding site is contributed by 32-37 (GAGYSG). 215-220 (GAGPSG) contacts NADP(+).

This sequence belongs to the FMO family. In terms of assembly, homotetramer. It depends on FAD as a cofactor. Hemolymph.

Its subcellular location is the secreted. It catalyses the reaction senecionine + NADPH + O2 = senecionine N-oxide + NADP(+) + H2O. In terms of biological role, NADPH-dependent monooxygenase that detoxifies senecionine and similar plant alkaloids that are ingested by the larvae. Is active towards a narrow range of related substrates with highest activity towards senecionine, followed by seneciphylline, retrorsine, monocrotaline, senecivernine, axillarine and axillaridine. This chain is Senecionine N-oxygenase (sno1), found in Tyria jacobaeae (Cinnabar moth).